An 89-amino-acid chain; its full sequence is Putative membrane protein insertion efficiency factor (89 aa).

The segment at 69–89 (DPVPPAHTERGGTMCPSRLPE) is disordered.

It belongs to the UPF0161 family.

It localises to the cell inner membrane. In terms of biological role, could be involved in insertion of integral membrane proteins into the membrane. The polypeptide is Putative membrane protein insertion efficiency factor (Paramagnetospirillum magneticum (strain ATCC 700264 / AMB-1) (Magnetospirillum magneticum)).